The chain runs to 392 residues: Elongation factor Tu-3 (392 aa).

A tr-type G domain is found at 10-206; that stretch reads KPHLNIGTMG…AVDTYVPMPE (197 aa). The segment at 19–26 is G1; it reads GHVDHGKT. 19–26 contacts GTP; sequence GHVDHGKT. Thr-26 serves as a coordination point for Mg(2+). Positions 63–67 are G2; that stretch reads GITIN. The tract at residues 84-87 is G3; that stretch reads DMPG. GTP is bound by residues 84–88 and 139–142; these read DMPGH and NKAD. A G4 region spans residues 139–142; the sequence is NKAD. The tract at residues 176-178 is G5; that stretch reads SGL.

The protein belongs to the TRAFAC class translation factor GTPase superfamily. Classic translation factor GTPase family. EF-Tu/EF-1A subfamily. As to quaternary structure, monomer.

The protein resides in the cytoplasm. It carries out the reaction GTP + H2O = GDP + phosphate + H(+). Its function is as follows. GTP hydrolase that promotes the GTP-dependent binding of aminoacyl-tRNA to the A-site of ribosomes during protein biosynthesis. This chain is Elongation factor Tu-3, found in Streptomyces coelicolor (strain ATCC BAA-471 / A3(2) / M145).